The sequence spans 175 residues: Methylated-DNA--protein-cysteine methyltransferase (175 aa).

Cys-142 (nucleophile; methyl group acceptor) is an active-site residue.

The protein belongs to the MGMT family.

It localises to the cytoplasm. The enzyme catalyses a 6-O-methyl-2'-deoxyguanosine in DNA + L-cysteinyl-[protein] = S-methyl-L-cysteinyl-[protein] + a 2'-deoxyguanosine in DNA. It catalyses the reaction a 4-O-methyl-thymidine in DNA + L-cysteinyl-[protein] = a thymidine in DNA + S-methyl-L-cysteinyl-[protein]. In terms of biological role, involved in the cellular defense against the biological effects of O6-methylguanine (O6-MeG) and O4-methylthymine (O4-MeT) in DNA. Repairs the methylated nucleobase in DNA by stoichiometrically transferring the methyl group to a cysteine residue in the enzyme. This is a suicide reaction: the enzyme is irreversibly inactivated. The chain is Methylated-DNA--protein-cysteine methyltransferase from Thermococcus barophilus (strain DSM 11836 / MP).